A 363-amino-acid chain; its full sequence is MRVSDFNFDLPDELIARYPKTDRVSCRLLQLNGENGEIFHRTFSDVLDLIDEGDLLIFNNTRVIPARMFGRKASGGKIEVLVERMLDEHRFLAHIRSSKSPKEGAELFLGEDKLGENNGIKAVMKARHSSLFEVELSDKSTALLDVLQTIGHMPLPPYIDRPDEEADKECYQTVYSKVPGAVAAPTAGLHFDENLLEKLKAKGVNFEFVTLHVGAGTFQPVRVENIEDHVMHAEYVEVSQEVCNAIIATKKAGKRVIAVGTTSVRSIESAALSAEEFGNPDLIEPYFSDTSIFIYPGKKFRVVDCLITNFHLPESTLIMLVSAFAGYKNTMNAYKHAVQEKYRFFSYGDAMFINKNSNVRGLE.

Belongs to the QueA family. Monomer.

It is found in the cytoplasm. The catalysed reaction is 7-aminomethyl-7-carbaguanosine(34) in tRNA + S-adenosyl-L-methionine = epoxyqueuosine(34) in tRNA + adenine + L-methionine + 2 H(+). Its pathway is tRNA modification; tRNA-queuosine biosynthesis. Functionally, transfers and isomerizes the ribose moiety from AdoMet to the 7-aminomethyl group of 7-deazaguanine (preQ1-tRNA) to give epoxyqueuosine (oQ-tRNA). This chain is S-adenosylmethionine:tRNA ribosyltransferase-isomerase, found in Haemophilus influenzae (strain PittGG).